The sequence spans 403 residues: GDSL esterase/lipase At1g28590 (403 aa).

Positions 1–27 (MASLDSLPAMKLVRFILSTLLVTSVNS) are cleaved as a signal peptide. Ser-43 serves as the catalytic Nucleophile. 2 N-linked (GlcNAc...) asparagine glycosylation sites follow: Asn-139 and Asn-323. Active-site residues include Asp-346 and His-349.

This sequence belongs to the 'GDSL' lipolytic enzyme family.

The protein resides in the secreted. This is GDSL esterase/lipase At1g28590 from Arabidopsis thaliana (Mouse-ear cress).